A 677-amino-acid chain; its full sequence is High-affinity choline transport protein (677 aa).

The next 12 membrane-spanning stretches (helical) occupy residues 15 to 35 (PVVF…TILF), 54 to 74 (FGWY…CIAC), 94 to 114 (LSWA…FFSV), 144 to 164 (FHYG…LGYF), 196 to 216 (IAAV…GVVQ), 233 to 253 (AKAA…TSGV), 265 to 285 (VALA…SFLL), 319 to 339 (WTLF…LFLA), 350 to 370 (FVLG…SVFG), 412 to 432 (VATI…ALVL), 452 to 472 (VFWS…NGIS), and 477 to 497 (TTVI…AGLY).

The protein belongs to the BCCT transporter (TC 2.A.15) family.

The protein localises to the cell inner membrane. It carries out the reaction choline(in) + H(+)(in) = choline(out) + H(+)(out). Its pathway is amine and polyamine biosynthesis; betaine biosynthesis via choline pathway. Functionally, high-affinity uptake of choline driven by a proton-motive force. The protein is High-affinity choline transport protein (betT) of Escherichia coli O157:H7.